We begin with the raw amino-acid sequence, 735 residues long: Mitochondrial potassium channel ATP-binding subunit (735 aa).

The transit peptide at 1 to 25 directs the protein to the mitochondrion; it reads MLVHLFRVGIRGGPFPGRLLPPLRF. Residues 26-144 are Mitochondrial matrix-facing; the sequence is QTFSAVRNTW…KLFWQFLHPH (119 aa). The helical transmembrane segment at 145-165 threads the bilayer; that stretch reads LLVLGVAVVLALGAALVNVQI. The ABC transmembrane type-1 domain occupies 150-437; sequence VAVVLALGAA…LSVLFGQVVR (288 aa). The Mitochondrial intermembrane portion of the chain corresponds to 166 to 195; sequence PLLLGQLVEVVAKYTRDHVGSFMTESQNLS. A helical transmembrane segment spans residues 196 to 216; that stretch reads THLLILYGVQGLLTFGYLVLL. Residues 217–295 lie on the Mitochondrial matrix side of the membrane; sequence SHVGERMAVD…SLSMLSTRLT (79 aa). Residues 296 to 316 form a helical membrane-spanning segment; sequence LLLMVATPALMGVGTLMGSGL. Residues 317–735 lie on the Mitochondrial intermembrane side of the membrane; it reads RKLSRQCQEQ…EGPRSHQHKS (419 aa). Positions 472–709 constitute an ABC transporter domain; the sequence is VTFQNVCFSY…GGLYAELIRR (238 aa). 507-514 contacts ATP; the sequence is GQSGGGKT. The interval 712 to 735 is disordered; that stretch reads LDAPRTAAPPPKKPEGPRSHQHKS.

It belongs to the ABC transporter superfamily. ABCB family. Multidrug resistance exporter (TC 3.A.1.201) subfamily. In terms of assembly, the mitochondrial potassium channel (mitoK(ATP)) is composed of 4 subunits of CCDC51/MITOK and 4 subunits of ABCB8/MITOSUR. Interacts with C10orf88/PAAT. Interacts with NRP1; NRP1 regulates ABCB8/MITOSUR protein levels in mitochondria. In terms of tissue distribution, ubiquitous.

The protein localises to the mitochondrion inner membrane. Its activity is regulated as follows. Channel activity inhibited by ATP via ABCB8/MITOSUR subunit. In terms of biological role, ATP-binding subunit of the mitochondrial ATP-gated potassium channel (mitoK(ATP)). Together with pore-forming subunit CCDC51/MITOK of the mitoK(ATP) channel, mediates ATP-dependent potassium currents across the mitochondrial inner membrane. An increase in ATP intracellular levels closes the channel, inhibiting K(+) transport, whereas a decrease in ATP levels enhances K(+) uptake in the mitochondrial matrix. Plays a role in mitochondrial iron transport. Required for maintenance of normal cardiac function, possibly by influencing mitochondrial iron export and regulating the maturation of cytosolic iron sulfur cluster-containing enzymes. The protein is Mitochondrial potassium channel ATP-binding subunit of Homo sapiens (Human).